The sequence spans 298 residues: Heterogeneous nuclear ribonucleoprotein C (298 aa).

Ala-2 is subject to N-acetylalanine. Residues Lys-8, Lys-50, Lys-89, and Lys-94 each participate in a glycyl lysine isopeptide (Lys-Gly) (interchain with G-Cter in SUMO2) cross-link. In terms of domain architecture, RRM spans 16-87 (SRVFIGNLNT…QVLDINLAAE (72 aa)). Ser-108 carries the phosphoserine modification. 2 disordered regions span residues 131–177 (PPPP…VKGD) and 204–298 (EKEQ…EDDS). The short motif at 142–148 (PSKRQRV) is the Nuclear localization signal element. Ser-149 and Ser-153 each carry phosphoserine. Positions 162 to 173 (SKSGQRGSSSKS) are enriched in low complexity. Lys-163 carries the N6-acetyllysine; alternate modification. Lys-163 is covalently cross-linked (Glycyl lysine isopeptide (Lys-Gly) (interchain with G-Cter in SUMO2); alternate). A coiled-coil region spans residues 176 to 211 (GDDLQAIKKELTQIKQKVDSLLESLEKIEKEQSKQA). Residue Lys-209 forms a Glycyl lysine isopeptide (Lys-Gly) (interchain with G-Cter in SUMO2) linkage. Phosphoserine occurs at positions 214, 216, and 217. Residue Lys-222 forms a Glycyl lysine isopeptide (Lys-Gly) (interchain with G-Cter in SUMO2) linkage. A Glycyl lysine isopeptide (Lys-Gly) (interchain with G-Cter in SUMO2); alternate cross-link involves residue Lys-225. A Glycyl lysine isopeptide (Lys-Gly) (interchain with G-Cter in SUMO1); alternate cross-link involves residue Lys-225. 4 positions are modified to phosphoserine: Ser-226, Ser-231, Ser-232, and Ser-234. The segment covering 235-246 (VKKDETNVKMES) has biased composition (basic and acidic residues). Glycyl lysine isopeptide (Lys-Gly) (interchain with G-Cter in SUMO2) cross-links involve residues Lys-236 and Lys-237. Lys-243 is covalently cross-linked (Glycyl lysine isopeptide (Lys-Gly) (interchain with G-Cter in SUMO2); alternate). Lys-243 is covalently cross-linked (Glycyl lysine isopeptide (Lys-Gly) (interchain with G-Cter in SUMO); alternate). Phosphoserine is present on residues Ser-246 and Ser-253. Acidic residues predominate over residues 248-269 (AGADDSAEEGDLLDDDDNEDRG). Residues 270–279 (DDQLELKDDE) are compositionally biased toward basic and acidic residues. The segment covering 280–298 (KEPEEGEDDRDSANGEDDS) has biased composition (acidic residues). Residues Ser-291 and Ser-298 each carry the phosphoserine modification.

Belongs to the RRM HNRPC family. RALY subfamily. Tetramer composed of 3 copies of isoform C1 and 1 copy of isoform C2. Assembly of 3 tetramers with bound pre-mRNA gives rise to a 19S complex that interacts with HNRNPA2B1 tetramers. Component of the 40S hnRNP particle. Identified in the spliceosome C complex. Interacts with IGF2BP1. Interacts with PPIA/CYPA. In terms of processing, phosphorylated on Ser-253 and Ser-291 in resting cells. Post-translationally, sumoylated. Sumoylation reduces affinity for mRNA. Ubiquitinated and degraded after nucleo-cytoplasmic transport by YWHAE.

The protein localises to the nucleus. In terms of biological role, binds pre-mRNA and nucleates the assembly of 40S hnRNP particles. Interacts with poly-U tracts in the 3'-UTR or 5'-UTR of mRNA and modulates the stability and the level of translation of bound mRNA molecules. Single HNRNPC tetramers bind 230-240 nucleotides. Trimers of HNRNPC tetramers bind 700 nucleotides. May play a role in the early steps of spliceosome assembly and pre-mRNA splicing. N6-methyladenosine (m6A) has been shown to alter the local structure in mRNAs and long non-coding RNAs (lncRNAs) via a mechanism named 'm(6)A-switch', facilitating binding of HNRNPC, leading to regulation of mRNA splicing. The sequence is that of Heterogeneous nuclear ribonucleoprotein C from Rattus norvegicus (Rat).